We begin with the raw amino-acid sequence, 422 residues long: MFPGSVIRKLSHSEEVFAQYEVFTSMTIQLRGVIDVDALSDAFDALLETHPVLASHLEQSSDGGWNLVADDLLHSGICVIDGTAATNGSPSGNAELRLDQSVSLLHLQLILREGGAELTLYLHHCMADGHHGAVLVDELFSRYTDAVTTGDPGPITPQPTPLSMEAVLAQRGIRKQGLSGAERFMSVMYAYEIPATETPAVLAHPGLPQAVPVTRLWLSKQQTSDLMAFGREHRLSLNAVVAAAILLTEWQLRNTPHVPIPYVYPVDLRFVLAPPVAPTEATNLLGAASYLAEIGPNTDIVDLASDIVATLRADLANGVIQQSGLHFGTAFEGTPPGLPPLVFCTDATSFPTMRTPPGLEIEDIKGQFYCSISVPLDLYSCAVYAGQLIIEHHGHIAEPGKSLEAIRSLLCTVPSEYGWIME.

Residue histidine 124 is the Proton acceptor of the active site.

The protein belongs to the acyltransferase PapA5 family. As to quaternary structure, monomer. Interacts directly with the acyl carrier protein (ACP) domain of the mycocerosic acid synthase (mas) protein.

It carries out the reaction 2 a mycocerosyl-[mycocerosic acid synthase] + a phthiocerol = a dimycocerosyl phthiocerol + 2 holo-[mycocerosic acid synthase].. The catalysed reaction is 2 a mycocerosyl-[mycocerosic acid synthase] + a phthiodiolone = a dimycocerosyl phthiodiolone + 2 holo-[mycocerosic acid synthase].. The enzyme catalyses 2 a mycocerosyl-[mycocerosic acid synthase] + a phenolphthiocerol = a dimycocerosyl phenolphthiocerol + 2 holo-[mycocerosic acid synthase].. In terms of biological role, catalyzes diesterification of phthiocerol, phthiodiolone, and phenolphthiocerol with mycocerosic acids, the final step in the phthiocerol, phthiodiolone and phenolphthiocerol dimycocerosate esters (PDIM) synthesis. Can directly transfer the mycocerosate bound to the mycocerosic acid synthase (mas) onto the substrate alcohols. This Mycobacterium tuberculosis (strain ATCC 25177 / H37Ra) protein is Phthiocerol/phthiodiolone dimycocerosyl transferase (papA5).